A 63-amino-acid polypeptide reads, in one-letter code: uncharacterized protein (63 aa).

A signal peptide spans methionine 1–alanine 21.

This is an uncharacterized protein from Haemophilus influenzae (strain ATCC 51907 / DSM 11121 / KW20 / Rd).